The following is a 302-amino-acid chain: Sulfate adenylyltransferase subunit 2 (302 aa).

Positions Arg-280–Phe-302 are disordered.

The protein belongs to the PAPS reductase family. CysD subfamily. Heterodimer composed of CysD, the smaller subunit, and CysN.

The catalysed reaction is sulfate + ATP + H(+) = adenosine 5'-phosphosulfate + diphosphate. It functions in the pathway sulfur metabolism; hydrogen sulfide biosynthesis; sulfite from sulfate: step 1/3. With CysN forms the ATP sulfurylase (ATPS) that catalyzes the adenylation of sulfate producing adenosine 5'-phosphosulfate (APS) and diphosphate, the first enzymatic step in sulfur assimilation pathway. APS synthesis involves the formation of a high-energy phosphoric-sulfuric acid anhydride bond driven by GTP hydrolysis by CysN coupled to ATP hydrolysis by CysD. The sequence is that of Sulfate adenylyltransferase subunit 2 from Vibrio atlanticus (strain LGP32) (Vibrio splendidus (strain Mel32)).